The sequence spans 383 residues: Glutaminyl-peptide cyclotransferase-like protein (383 aa).

Residues 1–25 form a disordered region; sequence MPSGGRGRPRLQVGERSLLERPSPP. The chain crosses the membrane as a helical span at residues 35–57; sequence LLPQLLLALTVASVFYTIWRIWH. An intrachain disulfide couples cysteine 168 to cysteine 192. Residue aspartate 187 coordinates Zn(2+). Glutamate 226 (proton acceptor) is an active-site residue. Glutamate 227 provides a ligand contact to Zn(2+). The active-site Proton acceptor is the aspartate 270. A Zn(2+)-binding site is contributed by histidine 352.

Belongs to the glutaminyl-peptide cyclotransferase family.

It localises to the golgi apparatus membrane. It carries out the reaction N-terminal L-glutaminyl-[peptide] = N-terminal 5-oxo-L-prolyl-[peptide] + NH4(+). Its function is as follows. Responsible for the biosynthesis of pyroglutamyl peptides. The chain is Glutaminyl-peptide cyclotransferase-like protein (QPCTL) from Bos taurus (Bovine).